Here is a 168-residue protein sequence, read N- to C-terminus: DAZ-associated protein 2 (168 aa).

A compositionally biased stretch (low complexity) spans 1–13; sequence MNSKGQYPTQPTY. The segment at 1-25 is disordered; sequence MNSKGQYPTQPTYPVQPPGNPVYPQ. The short motif at 39–42 is the PPAY element; sequence PPAY. Serine 77 is subject to Phosphoserine.

Interacts with SOX6. Interacts with DAZ1 and DAZL. Interacts with IL17RB. May interact with FAM168B. Interacts with INCA1. Interacts with EIF4G1 and EIF4G2. Interacts (via PPAY motif) with NEDD4 (via WW domains). Interacts with transcription factor TCF4; the interaction results in localization of DAZAP2 to the nucleus. Interacts with transcription factors TCF7 and TCF7L1. Interacts with transcription factor LEF1. Interacts with serine/threonine-protein kinase HIPK2; the interaction results in phosphorylation of DAZAP2 which causes localization of DAZAP2 to the nucleus, reduces interaction of DAZAP2 with HIPK2 and prevents DAZAP2-dependent degradation of HIPK2. Interacts with ubiquitin ligase SIAH1; the interaction is decreased following phosphorylation of DAZAP2 by HIPK2. Interacts with TP53; the interaction is triggered by DNA damage. In terms of processing, ubiquitinated by SMURF2, leading to proteasomal degradation. Ubiquitinated by NEDD4, leading to proteasomal degradation. Following DNA damage, phosphorylated by HIPK2 which promotes DAZAP2 localization to the nucleus, reduces interaction of DAZAP2 with HIPK2 and SIAH1, and prevents DAZAP2-dependent ubiquitination of HIPK2 by E3 ubiquitin-protein ligase SIAH1 and subsequent HIPK2 proteasomal degradation.

Its subcellular location is the cytoplasm. The protein resides in the nucleus. It is found in the nucleus speckle. The protein localises to the nuclear body. It localises to the stress granule. Functionally, in unstressed cells, promotes SIAH1-mediated polyubiquitination and degradation of the serine/threonine-protein kinase HIPK2, probably by acting as a loading factor that potentiates complex formation between HIPK2 and ubiquitin ligase SIAH1. In response to DNA damage, localizes to the nucleus following phosphorylation by HIPK2 and modulates the expression of a subset of TP53/p53 target genes by binding to TP53 at target gene promoters. This limits the expression of a number of cell death-mediating TP53 target genes, reducing DNA damage-induced cell death. Enhances the binding of transcription factor TCF7L2/TCF4, a Wnt signaling pathway effector, to the promoters of target genes. Plays a role in stress granule formation. In Rattus norvegicus (Rat), this protein is DAZ-associated protein 2.